The primary structure comprises 182 residues: Translation initiation factor IF-3 (182 aa).

The tract at residues 1–22 is disordered; sequence MPLGDCNISTPDNKQNRKNQEI.

This sequence belongs to the IF-3 family. As to quaternary structure, monomer.

It localises to the cytoplasm. In terms of biological role, IF-3 binds to the 30S ribosomal subunit and shifts the equilibrium between 70S ribosomes and their 50S and 30S subunits in favor of the free subunits, thus enhancing the availability of 30S subunits on which protein synthesis initiation begins. This chain is Translation initiation factor IF-3, found in Xanthomonas campestris pv. campestris (strain ATCC 33913 / DSM 3586 / NCPPB 528 / LMG 568 / P 25).